The primary structure comprises 143 residues: MSLSAAQKDNVKSSWAKASAAWGTAGPEFFMALFDAHDDVFAKFSGLFKGAAKGTVKNTPEMAAQAQSFKGLVSNWVDNLDNAGALEGQCKTFAANHKARGISAGQLEAAFKVLAGFMKSYGGDEGAWTAVAGALMGMIRPNM.

An N-acetylserine modification is found at S2. The Globin domain occupies 2 to 143 (SLSAAQKDNV…ALMGMIRPNM (142 aa)). H97 provides a ligand contact to heme b.

The protein belongs to the globin family. As to quaternary structure, monomer.

Its subcellular location is the cytoplasm. In terms of biological role, serves to transport hydrogen sulfide to autotrophic bacteria. In Phacoides pectinatus (Thick lucine), this protein is Hemoglobin-1.